The chain runs to 274 residues: uncharacterized protein (274 aa).

Positions 1–30 (MTIDTPAREDQTLAATHRAMWALGDYALMA) are cleaved as a signal peptide.

The protein to M.tuberculosis Rv1403c.

This is an uncharacterized protein from Mycobacterium bovis (strain ATCC BAA-935 / AF2122/97).